We begin with the raw amino-acid sequence, 280 residues long: Rhomboid-like protein 11, chloroplastic (280 aa).

The transit peptide at 1–57 directs the protein to the chloroplast; sequence MSQLLHLHRLSLPQSSLRFRFPPLHRRRAASSPTNSTQPPLQFRPLTVSRSQITCRF. The Stromal portion of the chain corresponds to 58 to 82; sequence SQSDITPQFELDKAKDNRKPQKRAN. A helical membrane pass occupies residues 83–103; the sequence is GIFWIILINLGIYLADHFFQV. Residues 104 to 117 are Chloroplast intermembrane-facing; it reads RGIKSLYLYHNFPA. The helical transmembrane segment at 118-140 threads the bilayer; that stretch reads WYQFVTATFCHANWNHLSSNLFF. The Stromal portion of the chain corresponds to 141-154; the sequence is LYIFGKLVEEEEGN. Residues 155 to 175 form a helical membrane-spanning segment; it reads FGLWLSYLFTGVGANLVSWLV. At 176–178 the chain is on the chloroplast intermembrane side; sequence LPR. Residues 179–199 form a helical membrane-spanning segment; that stretch reads NAVSVGASGAVFGLFAISVLV. Ser186 acts as the Nucleophile in catalysis. The Stromal portion of the chain corresponds to 200–243; it reads KMSWDWRKILEVLILGQFVIERVMEAAQASAGLSGTIYGGYSLQ. Residues 244–264 traverse the membrane as a helical segment; the sequence is TVNHIAHLSGALVGVVLVWLL. His250 serves as the catalytic Charge relay system. The Chloroplast intermembrane segment spans residues 265-280; it reads SKFPSASMDQDVKKSS.

The protein belongs to the peptidase S54 family. As to quaternary structure, homooligomer.

The protein localises to the plastid. Its subcellular location is the chloroplast inner membrane. Functionally, rhomboid-type serine protease that catalyzes intramembrane proteolysis. May be involved in TIC22 processing during its import. This chain is Rhomboid-like protein 11, chloroplastic, found in Arabidopsis thaliana (Mouse-ear cress).